A 917-amino-acid polypeptide reads, in one-letter code: Spermatogenesis-associated protein 31D3 (917 aa).

Residues F29–L49 form a helical membrane-spanning segment. Disordered regions lie at residues E55–K80, S152–L195, and S773–N797. Residues H63 to V74 show a composition bias toward basic residues. The span at S152–A163 shows a compositional bias: low complexity. The span at E164–T177 shows a compositional bias: polar residues. The segment covering L782–N797 has biased composition (basic and acidic residues).

The protein belongs to the SPATA31 family.

The protein localises to the membrane. In terms of biological role, may play a role in spermatogenesis. This is Spermatogenesis-associated protein 31D3 (SPATA31D3) from Homo sapiens (Human).